Here is a 211-residue protein sequence, read N- to C-terminus: Thymidylate kinase (211 aa).

Residue 11–18 (GPDGAGKT) participates in ATP binding.

It belongs to the thymidylate kinase family.

The enzyme catalyses dTMP + ATP = dTDP + ADP. Its function is as follows. Phosphorylation of dTMP to form dTDP in both de novo and salvage pathways of dTTP synthesis. The protein is Thymidylate kinase of Streptococcus uberis (strain ATCC BAA-854 / 0140J).